The primary structure comprises 1234 residues: DNA-directed RNA polymerase subunit beta (1234 aa).

Residues 1187–1234 (GREDAPPEEVYEEEYEEEPEELPEDIDFEPDNFDIDSEDLFMDDDYDG) form a disordered region. A compositionally biased stretch (acidic residues) spans 1192 to 1234 (PPEEVYEEEYEEEPEELPEDIDFEPDNFDIDSEDLFMDDDYDG).

Belongs to the RNA polymerase beta chain family. As to quaternary structure, the RNAP catalytic core consists of 2 alpha, 1 beta, 1 beta' and 1 omega subunit. When a sigma factor is associated with the core the holoenzyme is formed, which can initiate transcription.

The catalysed reaction is RNA(n) + a ribonucleoside 5'-triphosphate = RNA(n+1) + diphosphate. Functionally, DNA-dependent RNA polymerase catalyzes the transcription of DNA into RNA using the four ribonucleoside triphosphates as substrates. The polypeptide is DNA-directed RNA polymerase subunit beta (Caldanaerobacter subterraneus subsp. tengcongensis (strain DSM 15242 / JCM 11007 / NBRC 100824 / MB4) (Thermoanaerobacter tengcongensis)).